Reading from the N-terminus, the 270-residue chain is uncharacterized protein (270 aa).

30–55 (ATGSLGRVAARALADAGARLTLAGGN) serves as a coordination point for NADP(+). Ser-157 is a substrate binding site. Tyr-171 (proton acceptor) is an active-site residue.

It belongs to the short-chain dehydrogenases/reductases (SDR) family.

This is an uncharacterized protein from Mycobacterium tuberculosis (strain CDC 1551 / Oshkosh).